The following is a 679-amino-acid chain: Stress-70 protein, mitochondrial (679 aa).

A mitochondrion-targeting transit peptide spans 1-46 (MISASRAAAARLVGTAASRSPAAARPQDGWNGLSHEAFRFVSRRDY). Residues 1–432 (MISASRAAAA…IQGGVLAGDV (432 aa)) are interaction with NFS1. 2 residues coordinate ADP: threonine 63 and asparagine 64. The tract at residues 63–431 (TNSCVAVMEG…AIQGGVLAGD (369 aa)) is nucleotide-binding domain (NBD). Residue lysine 76 is modified to N6-acetyllysine. Threonine 87 is modified (phosphothreonine). N6-acetyllysine; alternate occurs at positions 135 and 138. N6-succinyllysine; alternate occurs at positions 135 and 138. Position 143 is an N6-acetyllysine (lysine 143). The residue at position 206 (lysine 206) is an N6-acetyllysine; alternate. Lysine 206 is subject to N6-succinyllysine; alternate. Position 206 is an N6-malonyllysine; alternate (lysine 206). 2 positions are modified to N6-acetyllysine: lysine 234 and lysine 288. Lysine 300 is subject to N6-acetyllysine; alternate. Lysine 300 is modified (N6-succinyllysine; alternate). ADP is bound by residues glutamate 313, lysine 316, and serine 320. Lysine 360 is modified (N6-acetyllysine; alternate). The residue at position 360 (lysine 360) is an N6-succinyllysine; alternate. N6-succinyllysine is present on lysine 368. ADP-binding residues include glycine 388 and arginine 391. The residue at position 394 (lysine 394) is an N6-succinyllysine. Serine 408 carries the phosphoserine modification. An interdomain linker region spans residues 432–441 (VTDVLLLDVT). Residues 432-679 (VTDVLLLDVT…QKEDQKEEKQ (248 aa)) form an interaction with FXN and ISCU region. A substrate-binding domain (SBD) region spans residues 442–679 (PLSLGIETLG…QKEDQKEEKQ (238 aa)). Residue arginine 513 is modified to Omega-N-methylarginine. 2 positions are modified to N6-acetyllysine; alternate: lysine 567 and lysine 600. N6-succinyllysine; alternate is present on residues lysine 567 and lysine 600. Lysine 610 is modified (N6-succinyllysine). Lysine 612 carries the post-translational modification N6-acetyllysine. N6-acetyllysine; alternate is present on lysine 646. Lysine 646 is subject to N6-succinyllysine; alternate. A disordered region spans residues 656-679 (ASEREGSGSSGTGEQKEDQKEEKQ). The segment covering 669–679 (EQKEDQKEEKQ) has biased composition (basic and acidic residues).

Belongs to the heat shock protein 70 family. In terms of assembly, interacts strongly with the intermediate form of FXN and weakly with its mature form. Interacts with HSCB. Associates with the mitochondrial contact site and cristae organizing system (MICOS) complex, composed of at least MICOS10/MIC10, CHCHD3/MIC19, CHCHD6/MIC25, APOOL/MIC27, IMMT/MIC60, APOO/MIC23/MIC26 and QIL1/MIC13. This complex was also known under the names MINOS or MitOS complex. The MICOS complex associates with mitochondrial outer membrane proteins SAMM50, MTX1, MTX2 and DNAJC11, mitochondrial inner membrane protein TMEM11 and with HSPA9. Interacts with DNLZ, the interaction is required to prevent self-aggregation. Interacts with TESPA1. Interacts with PDPN. Interacts with NFU1, NFS1 and ISCU. Interacts with TP53; the interaction promotes TP53 degradation. Interacts (via SBD domain) with UBXN2A; the interaction with UBXN2A inhibits HSPA9/MOT-2 interaction with and degradation of TP53, thereby promotes TP53 translocation to the nucleus. Interacts with ITPR1 AND VDAC1; this interaction couples ITPR1 to VDAC1. Component of the TIM23 mitochondrial inner membrane pre-sequence translocase complex.

The protein resides in the mitochondrion. The protein localises to the nucleus. It localises to the nucleolus. Its subcellular location is the cytoplasm. It is found in the mitochondrion matrix. The enzyme catalyses ATP + H2O = ADP + phosphate + H(+). The chaperone activity is regulated by ATP-induced allosteric coupling of the nucleotide-binding (NBD) and substrate-binding (SBD) domains. ATP binding in the NBD leads to a conformational change in the NBD, which is transferred through the interdomain linker (IDL) to the substrate-binding domain (SBD). This elicits a reduced substrate affinity and a faster substrate exchange rate. Upon hydrolysis of ATP to ADP, the protein undergoes a conformational change that increases its affinity for substrate proteins. It cycles through repeated phases of ATP hydrolysis and nucleotide exchange, facilitating repeated cycles of substrate binding and release. Functions in collaboration with co-chaperones. Functions with the co-chaperone, DNLZ, to maintain solubility and regulate ATP hydrolysis. Nucleotide exchange factors, GRPEL1 and GRPEL2, accelerate nucleotide exchange. Functionally, mitochondrial chaperone that plays a key role in mitochondrial protein import, folding, and assembly. Plays an essential role in the protein quality control system, the correct folding of proteins, the re-folding of misfolded proteins, and the targeting of proteins for subsequent degradation. These processes are achieved through cycles of ATP binding, ATP hydrolysis, and ADP release, mediated by co-chaperones. In mitochondria, it associates with the TIM (translocase of the inner membrane) protein complex to assist in the import and folding of mitochondrial proteins. Plays an important role in mitochondrial iron-sulfur cluster (ISC) biogenesis. Interacts with and stabilizes ISC cluster assembly proteins FXN, NFU1, NFS1 and ISCU. Regulates erythropoiesis via stabilization of ISC assembly. Regulates mitochondrial calcium-dependent apoptosis by coupling two calcium channels, ITPR1 and VDAC1, at the mitochondria-associated endoplasmic reticulum (ER) membrane to facilitate calcium transport from the ER lumen to the mitochondria intermembrane space, providing calcium for the downstream calcium channel MCU, which releases it into the mitochondrial matrix. Although primarily located in the mitochondria, it is also found in other cellular compartments. In the cytosol, it associates with proteins involved in signaling, apoptosis, or senescence. It may play a role in cell cycle regulation via its interaction with and promotion of degradation of TP53. May play a role in the control of cell proliferation and cellular aging. Protects against reactive oxygen species (ROS). Extracellular HSPA9 plays a cytoprotective role by preventing cell lysis following immune attack by the membrane attack complex by disrupting formation of the complex. The polypeptide is Stress-70 protein, mitochondrial (Mus musculus (Mouse)).